Consider the following 374-residue polypeptide: Flavonoid O-methyltransferase-like protein Os11g0303600 (374 aa).

4 residues coordinate S-adenosyl-L-homocysteine: D242, D262, M263, and K276. H280 serves as the catalytic Proton acceptor.

It belongs to the class I-like SAM-binding methyltransferase superfamily. Cation-independent O-methyltransferase family. COMT subfamily.

This chain is Flavonoid O-methyltransferase-like protein Os11g0303600, found in Oryza sativa subsp. japonica (Rice).